The following is a 258-amino-acid chain: 2-succinyl-6-hydroxy-2,4-cyclohexadiene-1-carboxylate synthase (258 aa).

This sequence belongs to the AB hydrolase superfamily. MenH family. As to quaternary structure, monomer.

It carries out the reaction 5-enolpyruvoyl-6-hydroxy-2-succinyl-cyclohex-3-ene-1-carboxylate = (1R,6R)-6-hydroxy-2-succinyl-cyclohexa-2,4-diene-1-carboxylate + pyruvate. The protein operates within quinol/quinone metabolism; 1,4-dihydroxy-2-naphthoate biosynthesis; 1,4-dihydroxy-2-naphthoate from chorismate: step 3/7. It participates in quinol/quinone metabolism; menaquinone biosynthesis. In terms of biological role, catalyzes a proton abstraction reaction that results in 2,5-elimination of pyruvate from 2-succinyl-5-enolpyruvyl-6-hydroxy-3-cyclohexene-1-carboxylate (SEPHCHC) and the formation of 2-succinyl-6-hydroxy-2,4-cyclohexadiene-1-carboxylate (SHCHC). The protein is 2-succinyl-6-hydroxy-2,4-cyclohexadiene-1-carboxylate synthase of Enterobacter sp. (strain 638).